A 407-amino-acid polypeptide reads, in one-letter code: 1-deoxy-D-xylulose 5-phosphate reductoisomerase (407 aa).

NADPH is bound by residues T25, G26, S27, I28, N53, and N136. K137 contributes to the 1-deoxy-D-xylulose 5-phosphate binding site. An NADPH-binding site is contributed by E138. Position 162 (D162) interacts with Mn(2+). S163, E164, S188, and H211 together coordinate 1-deoxy-D-xylulose 5-phosphate. E164 provides a ligand contact to Mn(2+). NADPH is bound at residue G217. Positions 224, 229, 230, and 233 each coordinate 1-deoxy-D-xylulose 5-phosphate. Residue E233 participates in Mn(2+) binding.

This sequence belongs to the DXR family. The cofactor is Mg(2+). Mn(2+) is required as a cofactor.

The enzyme catalyses 2-C-methyl-D-erythritol 4-phosphate + NADP(+) = 1-deoxy-D-xylulose 5-phosphate + NADPH + H(+). Its pathway is isoprenoid biosynthesis; isopentenyl diphosphate biosynthesis via DXP pathway; isopentenyl diphosphate from 1-deoxy-D-xylulose 5-phosphate: step 1/6. In terms of biological role, catalyzes the NADPH-dependent rearrangement and reduction of 1-deoxy-D-xylulose-5-phosphate (DXP) to 2-C-methyl-D-erythritol 4-phosphate (MEP). The sequence is that of 1-deoxy-D-xylulose 5-phosphate reductoisomerase from Rhodopseudomonas palustris (strain BisA53).